We begin with the raw amino-acid sequence, 138 residues long: 1,4-dihydroxy-2-naphthoyl-CoA hydrolase (138 aa).

Asp13 is a catalytic residue.

This sequence belongs to the 4-hydroxybenzoyl-CoA thioesterase family. DHNA-CoA hydrolase subfamily.

The enzyme catalyses 1,4-dihydroxy-2-naphthoyl-CoA + H2O = 1,4-dihydroxy-2-naphthoate + CoA + H(+). Its pathway is cofactor biosynthesis; phylloquinone biosynthesis. The protein operates within quinol/quinone metabolism; 1,4-dihydroxy-2-naphthoate biosynthesis; 1,4-dihydroxy-2-naphthoate from chorismate: step 7/7. In terms of biological role, catalyzes the hydrolysis of 1,4-dihydroxy-2-naphthoyl-CoA (DHNA-CoA) to 1,4-dihydroxy-2-naphthoate (DHNA), a reaction involved in phylloquinone (vitamin K1) biosynthesis. This is 1,4-dihydroxy-2-naphthoyl-CoA hydrolase from Microcystis aeruginosa (strain NIES-843 / IAM M-2473).